Consider the following 407-residue polypeptide: E3 ubiquitin-protein ligase TRIM13 (407 aa).

The segment at 10 to 58 (CPICCSLFDDPRVLPCSHNFCKKCLEGILEGNVRNSLWRSSPFKCPTCR) adopts an RING-type zinc-finger fold. The segment at 89 to 131 (PKMPVCKGHLGQPLNIFCLTDMQLICGICATRGEHTKHVFCSI) adopts a B box-type zinc-finger fold. The Zn(2+) site is built by C94, H97, C117, and H123. Residues 172–200 (LQLLTKDSDKVKEFFEKLQYTLDQKKNEI) adopt a coiled-coil conformation. A helical membrane pass occupies residues 316-336 (PLFVVVILLGLLIFFSPTMFL).

As to quaternary structure, interacts (via C-terminal domain) with VCP. Interacts with AKT1; the interaction ubiquitinates AKT1 and leads to its proteasomal degradation. Interacts with MDM2; the interaction ubiquitinates AKT1 and leads to its proteasomal degradation. Interacts with p62/SQSTM1. Interacts with TRAF6. Interacts with IKBKG/NEMO. In terms of processing, auto-ubiquitinated; requires the RING-type zinc finger. Auto-polyubiquitination leads to proteasomal degradation.

It localises to the endoplasmic reticulum membrane. It catalyses the reaction S-ubiquitinyl-[E2 ubiquitin-conjugating enzyme]-L-cysteine + [acceptor protein]-L-lysine = [E2 ubiquitin-conjugating enzyme]-L-cysteine + N(6)-ubiquitinyl-[acceptor protein]-L-lysine.. Its pathway is protein modification; protein ubiquitination. Endoplasmic reticulum (ER) membrane anchored E3 ligase involved in the retrotranslocation and turnover of membrane and secretory proteins from the ER through a set of processes named ER-associated degradation (ERAD). This process acts on misfolded proteins as well as in the regulated degradation of correctly folded proteins. Enhances ionizing radiation-induced p53/TP53 stability and apoptosis via ubiquitinating MDM2 and AKT1 and decreasing AKT1 kinase activity through MDM2 and AKT1 proteasomal degradation. Regulates ER stress-induced autophagy, and may act as a tumor suppressor. Also plays a role in innate immune response by stimulating NF-kappa-B activity in the TLR2 signaling pathway. Ubiquitinates TRAF6 via the 'Lys-29'-linked polyubiquitination chain resulting in NF-kappa-B activation. Participates as well in T-cell receptor-mediated NF-kappa-B activation. In the presence of TNF, modulates the IKK complex by regulating IKBKG/NEMO ubiquitination leading to the repression of NF-kappa-B. The polypeptide is E3 ubiquitin-protein ligase TRIM13 (TRIM13) (Bos taurus (Bovine)).